Here is a 475-residue protein sequence, read N- to C-terminus: Ankyrin repeat, SAM and basic leucine zipper domain-containing protein 1 (475 aa).

Residues 1–25 are disordered; sequence MAAGTLRGLAVAGGGESSDSEDDGW. A phosphoserine mark is found at S17, S18, and S20. 6 ANK repeats span residues 45–74, 78–107, 110–144, 148–177, 181–210, and 214–243; these read EKNE…NVDS, YGWT…NASF, DKLT…DPNT, RLMT…EVNA, NGYT…NKML, and DGRT…PLEG. The region spanning 272–334 is the SAM domain; sequence PYTAFGDLEI…KILAALKELE (63 aa).

In terms of assembly, interacts with DDX4, PIWIL1, RANBP9 and TDRD1. Expressed exclusively in testis and ovary with higher levels in testis.

It localises to the cytoplasm. Its function is as follows. Plays a central role during spermatogenesis by repressing transposable elements and preventing their mobilization, which is essential for the germline integrity. Acts via the piRNA metabolic process, which mediates the repression of transposable elements during meiosis by forming complexes composed of piRNAs and Piwi proteins and governs the methylation and subsequent repression of transposons. Its association with pi-bodies suggests a participation in the primary piRNAs metabolic process. Required prior to the pachytene stage to facilitate the production of multiple types of piRNAs, including those associated with repeats involved in regulation of retrotransposons. May act by mediating protein-protein interactions during germ cell maturation. The polypeptide is Ankyrin repeat, SAM and basic leucine zipper domain-containing protein 1 (Mus musculus (Mouse)).